The sequence spans 359 residues: DNA-directed RNA polymerase RPB3-11 homolog (359 aa).

The protein in the N-terminal section; belongs to the archaeal RpoD/eukaryotic RPB3 RNA polymerase subunit family. In the C-terminal section; belongs to the archaeal RpoL/eukaryotic RPB11/RPC19 RNA polymerase subunit family. In terms of assembly, part of the viral DNA-directed RNA polymerase that consists of 8 polII-like subunits (RPB1, RPB2, RPB3, RPB5, RPB6, RPB7, RPB9, RPB10), a capping enzyme and a termination factor.

The protein resides in the host cytoplasm. It localises to the virion. In terms of biological role, component of the DNA-directed RNA polymerase (RNAP) that catalyzes the transcription in the cytoplasm of viral DNA into RNA using the four ribonucleoside triphosphates as substrates. This is DNA-directed RNA polymerase RPB3-11 homolog from Ornithodoros (relapsing fever ticks).